Consider the following 182-residue polypeptide: Adenylate kinase isoenzyme 6 homolog (182 aa).

The segment at 1-20 (MATPETRRRPNILVTGSPGT) is disordered. The ATP site is built by G19, G21, K22, S23, and T24. The interval 39-62 (EVSKEVRENNLQGDFDEQYNCHVL) is NMPbind. The segment at 116–126 (SRGYSEFKIKE) is LID. R117 provides a ligand contact to ATP.

It belongs to the adenylate kinase family. AK6 subfamily. As to quaternary structure, monomer and homodimer. Interacts with small ribosomal subunit protein uS11. Not a structural component of 43S pre-ribosomes, but transiently interacts with them by binding to uS11.

Its subcellular location is the cytoplasm. It localises to the nucleus. It catalyses the reaction AMP + ATP = 2 ADP. It carries out the reaction ATP + H2O = ADP + phosphate + H(+). Functionally, broad-specificity nucleoside monophosphate (NMP) kinase that catalyzes the reversible transfer of the terminal phosphate group between nucleoside triphosphates and monophosphates. Also has ATPase activity. Involved in the late cytoplasmic maturation steps of the 40S ribosomal particles, specifically 18S rRNA maturation. While NMP activity is not required for ribosome maturation, ATPase activity is. Associates transiently with small ribosomal subunit protein uS11. ATP hydrolysis breaks the interaction with uS11. May temporarily remove uS11 from the ribosome to enable a conformational change of the ribosomal RNA that is needed for the final maturation step of the small ribosomal subunit. Its NMP activity may have a role in nuclear energy homeostasis. AMP and dAMP are the preferred substrates, but CMP and TMP are also good substrates. ATP and dATP are the best phosphate donors. This chain is Adenylate kinase isoenzyme 6 homolog, found in Caenorhabditis elegans.